The following is a 329-amino-acid chain: 7,8-didemethyl-8-hydroxy-5-deazariboflavin synthase (329 aa).

Residues methionine 1 to asparagine 235 form the Radical SAM core domain. [4Fe-4S] cluster-binding residues include cysteine 9, cysteine 13, and cysteine 16.

It belongs to the radical SAM superfamily. CofG family. In terms of assembly, consists of two subunits, CofG and CofH. [4Fe-4S] cluster serves as cofactor.

It catalyses the reaction 5-amino-5-(4-hydroxybenzyl)-6-(D-ribitylimino)-5,6-dihydrouracil + S-adenosyl-L-methionine = 7,8-didemethyl-8-hydroxy-5-deazariboflavin + 5'-deoxyadenosine + L-methionine + NH4(+) + H(+). It participates in cofactor biosynthesis; coenzyme F0 biosynthesis. Functionally, catalyzes the radical-mediated synthesis of 7,8-didemethyl-8-hydroxy-5-deazariboflavin from 5-amino-5-(4-hydroxybenzyl)-6-(D-ribitylimino)-5,6-dihydrouracil. In Methanosarcina acetivorans (strain ATCC 35395 / DSM 2834 / JCM 12185 / C2A), this protein is 7,8-didemethyl-8-hydroxy-5-deazariboflavin synthase.